Here is a 138-residue protein sequence, read N- to C-terminus: Large ribosomal subunit protein bL19 (138 aa).

It belongs to the bacterial ribosomal protein bL19 family.

Its function is as follows. This protein is located at the 30S-50S ribosomal subunit interface and may play a role in the structure and function of the aminoacyl-tRNA binding site. In Rickettsia rickettsii (strain Iowa), this protein is Large ribosomal subunit protein bL19.